Reading from the N-terminus, the 142-residue chain is Large ribosomal subunit protein uL13 (142 aa).

Belongs to the universal ribosomal protein uL13 family. In terms of assembly, part of the 50S ribosomal subunit.

In terms of biological role, this protein is one of the early assembly proteins of the 50S ribosomal subunit, although it is not seen to bind rRNA by itself. It is important during the early stages of 50S assembly. The chain is Large ribosomal subunit protein uL13 from Acidithiobacillus ferrooxidans (strain ATCC 23270 / DSM 14882 / CIP 104768 / NCIMB 8455) (Ferrobacillus ferrooxidans (strain ATCC 23270)).